The sequence spans 421 residues: Synaptotagmin-1 (421 aa).

The Vesicular segment spans residues 1 to 57 (MVSASRPEALAAPVTTVATLVPHNATEPASPGEGKEDAFSKLKQKFMNELHKIPLPP). N-linked (GlcNAc...) asparagine glycosylation is present at N24. Residues 58–79 (WALIAIAIVAVLLVVTCCFCVC) form a helical membrane-spanning segment. Residues C74, C75, C77, C79, and C82 are each lipidated (S-palmitoyl cysteine). At 80 to 421 (KKCLFKKKNK…EVDAMLAVKK (342 aa)) the chain is on the cytoplasmic side. A disordered region spans residues 112-141 (TMKDQALKDDDAETGLTDGEEKEEPKEEEK). The segment covering 121-133 (DDAETGLTDGEEK) has biased composition (acidic residues). T128 is modified (phosphothreonine). The phospholipid binding stretch occupies residues 135 to 381 (EPKEEEKLGK…AIGKVFVGYN (247 aa)). A C2 1 domain is found at 141-260 (KLGKLQYSLD…DFGHVTEEWR (120 aa)). Positions 171, 172, and 178 each coordinate Ca(2+). Y229 carries the post-translational modification Phosphotyrosine. D230, F231, D232, S235, K236, and D238 together coordinate Ca(2+). S264 carries the post-translational modification Phosphoserine. Residues 272–405 (KLGDICFSLR…NPRRPIAQWH (134 aa)) form the C2 2 domain. Residues D303 and D309 each coordinate Ca(2+). S342 and S344 each carry phosphoserine. 3 residues coordinate Ca(2+): D363, D365, and D371.

This sequence belongs to the synaptotagmin family. In terms of assembly, homotetramer. Heterodimer; heterodimerizes with SYT2 in presence of calcium. Interacts with SCAMP5. Interacts with STON2. Forms a complex with SV2B, syntaxin 1 and SNAP25. Interacts with SV2A, SV2B and SV2C. Interacts with RIMS1. Interacts with PRRT2. Interacts with DNAJC5 in a phosphorylation-dependent manner. Interacts (via N-terminus) with RAB3A. Interacts with SYT12. Interacts with calmodulin. Interacts with DNM1 (via C-terminal proline-rich domain (PRD)); this interaction facilitates vesicle fission during clathrin-mediated endocytosis (CME). The cofactor is Ca(2+). Glycosylated. As to expression, expressed in the brain and adrenal medulla (at protein level).

It localises to the cytoplasmic vesicle. The protein resides in the secretory vesicle membrane. It is found in the secretory vesicle. The protein localises to the synaptic vesicle membrane. Its subcellular location is the chromaffin granule membrane. It localises to the cytoplasm. In terms of biological role, calcium sensor that participates in triggering neurotransmitter release at the synapse. May have a regulatory role in the membrane interactions during trafficking of synaptic vesicles at the active zone of the synapse. It binds acidic phospholipids with a specificity that requires the presence of both an acidic head group and a diacyl backbone. A Ca(2+)-dependent interaction between synaptotagmin and putative receptors for activated protein kinase C has also been reported. It can bind to at least three additional proteins in a Ca(2+)-independent manner; these are neurexins, syntaxin and AP2. Plays a role in dendrite formation by melanocytes. This chain is Synaptotagmin-1, found in Mus musculus (Mouse).